Reading from the N-terminus, the 421-residue chain is Gamma-glutamyl phosphate reductase (421 aa).

This sequence belongs to the gamma-glutamyl phosphate reductase family.

The protein localises to the cytoplasm. It catalyses the reaction L-glutamate 5-semialdehyde + phosphate + NADP(+) = L-glutamyl 5-phosphate + NADPH + H(+). It functions in the pathway amino-acid biosynthesis; L-proline biosynthesis; L-glutamate 5-semialdehyde from L-glutamate: step 2/2. In terms of biological role, catalyzes the NADPH-dependent reduction of L-glutamate 5-phosphate into L-glutamate 5-semialdehyde and phosphate. The product spontaneously undergoes cyclization to form 1-pyrroline-5-carboxylate. This chain is Gamma-glutamyl phosphate reductase, found in Brucella melitensis biotype 1 (strain ATCC 23456 / CCUG 17765 / NCTC 10094 / 16M).